We begin with the raw amino-acid sequence, 176 residues long: Disulfide bond formation protein B (176 aa).

Residues 1–14 (MLQFLNRCSKGRGA) are Cytoplasmic-facing. Residues 15–31 (WLLMALTALVLELVALY) traverse the membrane as a helical segment. Over 32–49 (FQHVMLLQPCVMCIYERA) the chain is Periplasmic. Cysteine 41 and cysteine 44 are joined by a disulfide. A helical membrane pass occupies residues 50-65 (ALFGILGASLLGAIAP). At 66–71 (KSPLRY) the chain is on the cytoplasmic side. A helical membrane pass occupies residues 72–89 (LAIFIWIYSAWKGVQLAW). Over 90–144 (THTMLQLHPSPFTTCDFFVSFPSWLPLDKWFPAVFVASGDCAVKQWEFLSLEMPQ) the chain is Periplasmic. An intrachain disulfide couples cysteine 104 to cysteine 130. Residues 145 to 163 (WLVGIFAAYLFIAILVLIS) traverse the membrane as a helical segment. The Cytoplasmic portion of the chain corresponds to 164–176 (QFVKPKRRDLFSR).

Belongs to the DsbB family.

It is found in the cell inner membrane. Functionally, required for disulfide bond formation in some periplasmic proteins. Acts by oxidizing the DsbA protein. The sequence is that of Disulfide bond formation protein B from Yersinia enterocolitica serotype O:8 / biotype 1B (strain NCTC 13174 / 8081).